Consider the following 132-residue polypeptide: UPF0102 protein Acid_2433 (132 aa).

This sequence belongs to the UPF0102 family.

The sequence is that of UPF0102 protein Acid_2433 from Solibacter usitatus (strain Ellin6076).